The primary structure comprises 874 residues: Pyruvate, phosphate dikinase (874 aa).

The interval 2-340 is N-terminal; sequence AKWVYKFEEG…LYFLQTRNGK (339 aa). Residue Arg92 coordinates ATP. The segment at 340–399 is linker 1; it reads KRTAPAALQIACDLVDEGMITEEEAVVRIEAKSLDQLLHPTFNPAALKAGEVIGSALPAS. The central stretch occupies residues 400 to 498; that stretch reads PGAAAGKVYF…TFAEGDYISL (99 aa). Residue Thr453 is modified to Phosphothreonine; by PDRP1. His455 serves as the catalytic Tele-phosphohistidine intermediate. The linker 2 stretch occupies residues 499-533; sequence DGSTGKIYKGDIETQEASVSGSFERIMVWADKFRT. The interval 534–874 is C-terminal; the sequence is LKVRTNADTP…AAAQAALNNK (341 aa). 7 residues coordinate substrate: Arg561, Arg617, Glu745, Gly766, Thr767, Asn768, and Asp769. A Mg(2+)-binding site is contributed by Glu745. Mg(2+) is bound at residue Asp769. The active-site Proton donor is the Cys831.

The protein belongs to the PEP-utilizing enzyme family. As to quaternary structure, homodimer. Mg(2+) is required as a cofactor. In terms of processing, phosphorylation of Thr-453 in the dark inactivates the enzyme. Dephosphorylation upon light stimulation reactivates the enzyme.

It catalyses the reaction pyruvate + phosphate + ATP = phosphoenolpyruvate + AMP + diphosphate + H(+). With respect to regulation, activated by light-induced dephosphorylation. Inhibited by dark-induced phosphorylation. Both reactions are catalyzed by PDRP1. Functionally, catalyzes the reversible phosphorylation of pyruvate and phosphate. In E.histolytica and C.symbiosus, PPDK functions in the direction of ATP synthesis. This Clostridium symbiosum (Bacteroides symbiosus) protein is Pyruvate, phosphate dikinase (ppdK).